The following is a 255-amino-acid chain: Small ribosomal subunit protein eS1 (255 aa).

The span at 1–18 (MAVGKNKRLSKGKKGLKK) shows a compositional bias: basic residues. Residues 1–22 (MAVGKNKRLSKGKKGLKKRAQD) form a disordered region. The residue at position 2 (A2) is an N-acetylalanine; partial.

It belongs to the eukaryotic ribosomal protein eS1 family. In terms of assembly, component of the small ribosomal subunit. Mature ribosomes consist of a small (40S) and a large (60S) subunit. The 40S subunit contains about 33 different proteins and 1 molecule of RNA (18S). The 60S subunit contains about 49 different proteins and 3 molecules of RNA (25S, 5.8S and 5S).

It localises to the cytoplasm. This chain is Small ribosomal subunit protein eS1, found in Uncinocarpus reesii (strain UAMH 1704).